The primary structure comprises 249 residues: Imidazole glycerol phosphate synthase subunit HisF (249 aa).

Catalysis depends on residues Asp-11 and Asp-130.

This sequence belongs to the HisA/HisF family. In terms of assembly, heterodimer of HisH and HisF.

The protein localises to the cytoplasm. It carries out the reaction 5-[(5-phospho-1-deoxy-D-ribulos-1-ylimino)methylamino]-1-(5-phospho-beta-D-ribosyl)imidazole-4-carboxamide + L-glutamine = D-erythro-1-(imidazol-4-yl)glycerol 3-phosphate + 5-amino-1-(5-phospho-beta-D-ribosyl)imidazole-4-carboxamide + L-glutamate + H(+). It functions in the pathway amino-acid biosynthesis; L-histidine biosynthesis; L-histidine from 5-phospho-alpha-D-ribose 1-diphosphate: step 5/9. IGPS catalyzes the conversion of PRFAR and glutamine to IGP, AICAR and glutamate. The HisF subunit catalyzes the cyclization activity that produces IGP and AICAR from PRFAR using the ammonia provided by the HisH subunit. The sequence is that of Imidazole glycerol phosphate synthase subunit HisF from Exiguobacterium sibiricum (strain DSM 17290 / CCUG 55495 / CIP 109462 / JCM 13490 / 255-15).